The sequence spans 227 residues: ATP-dependent dethiobiotin synthetase BioD (227 aa).

13 to 18 contributes to the ATP binding site; that stretch reads NIGKTV. Residue threonine 17 participates in Mg(2+) binding. Lysine 38 is a catalytic residue. Residues aspartate 55 and 116–119 each bind ATP; that span reads EGIG. Residues aspartate 55 and glutamate 116 each contribute to the Mg(2+) site.

It belongs to the dethiobiotin synthetase family. In terms of assembly, homodimer. The cofactor is Mg(2+).

The protein localises to the cytoplasm. The catalysed reaction is (7R,8S)-7,8-diammoniononanoate + CO2 + ATP = (4R,5S)-dethiobiotin + ADP + phosphate + 3 H(+). The protein operates within cofactor biosynthesis; biotin biosynthesis; biotin from 7,8-diaminononanoate: step 1/2. Functionally, catalyzes a mechanistically unusual reaction, the ATP-dependent insertion of CO2 between the N7 and N8 nitrogen atoms of 7,8-diaminopelargonic acid (DAPA, also called 7,8-diammoniononanoate) to form a ureido ring. In Buchnera aphidicola subsp. Baizongia pistaciae (strain Bp), this protein is ATP-dependent dethiobiotin synthetase BioD.